The primary structure comprises 405 residues: Cystathionine gamma-lyase (405 aa).

Residues Arg-62, Tyr-114, and Arg-119 each coordinate substrate. Lys-212 is subject to N6-(pyridoxal phosphate)lysine. Residue Glu-339 coordinates substrate.

Belongs to the trans-sulfuration enzymes family. In terms of assembly, homotetramer. Interacts with CALM in a calcium-dependent manner. Pyridoxal 5'-phosphate is required as a cofactor.

It localises to the cytoplasm. It carries out the reaction L,L-cystathionine + H2O = 2-oxobutanoate + L-cysteine + NH4(+). It functions in the pathway amino-acid biosynthesis; L-cysteine biosynthesis; L-cysteine from L-homocysteine and L-serine: step 2/2. Its function is as follows. Catalyzes the last step in the trans-sulfuration pathway from methionine to cysteine. Has broad substrate specificity. Converts cystathionine to cysteine, ammonia and 2-oxobutanoate. Converts two cysteine molecules to lanthionine and hydrogen sulfide. Can also accept homocysteine as substrate. Specificity depends on the levels of the endogenous substrates. Generates the endogenous signaling molecule hydrogen sulfide (H2S), and so contributes to the regulation of blood pressure. Acts as a cysteine-protein sulfhydrase by mediating sulfhydration of target proteins: sulfhydration consists of converting -SH groups into -SSH on specific cysteine residues of target proteins such as GAPDH, PTPN1 and NF-kappa-B subunit RELA, thereby regulating their function. The protein is Cystathionine gamma-lyase (CTH) of Bos taurus (Bovine).